Here is a 141-residue protein sequence, read N- to C-terminus: Nucleoside diphosphate kinase (141 aa).

Residues lysine 11, phenylalanine 59, arginine 87, threonine 93, arginine 104, and asparagine 114 each contribute to the ATP site. Residue histidine 117 is the Pros-phosphohistidine intermediate of the active site.

Belongs to the NDK family. As to quaternary structure, homotetramer. Requires Mg(2+) as cofactor.

Its subcellular location is the cytoplasm. The enzyme catalyses a 2'-deoxyribonucleoside 5'-diphosphate + ATP = a 2'-deoxyribonucleoside 5'-triphosphate + ADP. The catalysed reaction is a ribonucleoside 5'-diphosphate + ATP = a ribonucleoside 5'-triphosphate + ADP. Major role in the synthesis of nucleoside triphosphates other than ATP. The ATP gamma phosphate is transferred to the NDP beta phosphate via a ping-pong mechanism, using a phosphorylated active-site intermediate. This chain is Nucleoside diphosphate kinase, found in Neisseria gonorrhoeae (strain NCCP11945).